The chain runs to 23 residues: Profilin (23 aa).

The protein belongs to the profilin family. As to quaternary structure, occurs in many kinds of cells as a complex with monomeric actin in a 1:1 ratio.

It is found in the cytoplasm. Its subcellular location is the cytoskeleton. In terms of biological role, binds to actin and affects the structure of the cytoskeleton. At high concentrations, profilin prevents the polymerization of actin, whereas it enhances it at low concentrations. By binding to PIP2, it inhibits the formation of IP3 and DG. This chain is Profilin, found in Beta vulgaris (Sugar beet).